The primary structure comprises 483 residues: MGLFDFSVKELHDKLVKKEISPFDLVSESFNRIESVEDKVGSFITLNKEAAFGVAEELGDAGIDPNNMLSGLPIGIKDNIVTKNLRTTAASKILENFDPIYDATVVSKLKNAQTINIGKLNMDEFAMGSSTETSYFHKTHNPWDLSRVPGGSSGGSASAVAAGEVLFSLGSDTGGSIRQPAAFCGVVGMKPTYGRVSRFGLIAFASSLDQIGPITKNVEDNAYLLEAISGLDANDSTSINQPVERFSNSLTGDIKGLRIGVPKEYLGEGVDPGVKQAVLDALKTLEKLGATWDEVSLPHSEYGVASYYILASSEASSNLSRFDGVRYGYRSPNATTLEELYTKTRSEGFGDEVKRRIMLGTYALSSGYYDAYYKKAQQARTLIKQDFVNVFENYDVIIGPSSPTTAFKIDGMINDPITMYSNDILTVPINLAGVPAISVPCGFSDGLPVGLQIIGNYFEESLLYKVAHAFEQETTFHKEKPNL.

Catalysis depends on charge relay system residues Lys77 and Ser152. Ser176 (acyl-ester intermediate) is an active-site residue.

This sequence belongs to the amidase family. GatA subfamily. Heterotrimer of A, B and C subunits.

The catalysed reaction is L-glutamyl-tRNA(Gln) + L-glutamine + ATP + H2O = L-glutaminyl-tRNA(Gln) + L-glutamate + ADP + phosphate + H(+). Functionally, allows the formation of correctly charged Gln-tRNA(Gln) through the transamidation of misacylated Glu-tRNA(Gln) in organisms which lack glutaminyl-tRNA synthetase. The reaction takes place in the presence of glutamine and ATP through an activated gamma-phospho-Glu-tRNA(Gln). In Listeria monocytogenes serotype 4b (strain CLIP80459), this protein is Glutamyl-tRNA(Gln) amidotransferase subunit A.